The primary structure comprises 546 residues: uncharacterized protein (546 aa).

Helical transmembrane passes span 106 to 126 (WWIV…SSVY), 145 to 165 (TLGS…FAPL), 172 to 192 (FIIY…GGCA), 231 to 251 (YVLP…PIIG), 263 to 283 (WTFW…FIFF), 332 to 352 (LIFT…VYII), 375 to 395 (GLSF…TPFI), 416 to 436 (LYPL…FAWT), 444 to 464 (WIVP…VFFV), and 510 to 530 (WATS…FIFY).

Belongs to the major facilitator superfamily. CAR1 family.

The protein resides in the endoplasmic reticulum membrane. This is an uncharacterized protein from Schizosaccharomyces pombe (strain 972 / ATCC 24843) (Fission yeast).